Reading from the N-terminus, the 113-residue chain is Ig heavy chain V-III region T957 (113 aa).

The region spanning 1–113 is the Ig-like domain; the sequence is EVKLEESGGG…YWGQGTLVTV (113 aa). An intrachain disulfide couples Cys-22 to Cys-98.

This chain is Ig heavy chain V-III region T957, found in Mus musculus (Mouse).